Reading from the N-terminus, the 110-residue chain is Large ribosomal subunit protein uL22 (110 aa).

The protein belongs to the universal ribosomal protein uL22 family. In terms of assembly, part of the 50S ribosomal subunit.

Its function is as follows. This protein binds specifically to 23S rRNA; its binding is stimulated by other ribosomal proteins, e.g. L4, L17, and L20. It is important during the early stages of 50S assembly. It makes multiple contacts with different domains of the 23S rRNA in the assembled 50S subunit and ribosome. In terms of biological role, the globular domain of the protein is located near the polypeptide exit tunnel on the outside of the subunit, while an extended beta-hairpin is found that lines the wall of the exit tunnel in the center of the 70S ribosome. The polypeptide is Large ribosomal subunit protein uL22 (Nitrosomonas eutropha (strain DSM 101675 / C91 / Nm57)).